A 135-amino-acid chain; its full sequence is Large ribosomal subunit protein uL16 (135 aa).

This sequence belongs to the universal ribosomal protein uL16 family. As to quaternary structure, part of the 50S ribosomal subunit.

Binds 23S rRNA and is also seen to make contacts with the A and possibly P site tRNAs. In Carsonella ruddii (strain PV), this protein is Large ribosomal subunit protein uL16 (rplP).